The chain runs to 202 residues: ATP-dependent Clp protease proteolytic subunit (202 aa).

The Nucleophile role is filled by Ser-106. His-131 is an active-site residue.

The protein belongs to the peptidase S14 family. In terms of assembly, fourteen ClpP subunits assemble into 2 heptameric rings which stack back to back to give a disk-like structure with a central cavity, resembling the structure of eukaryotic proteasomes.

It localises to the cytoplasm. The catalysed reaction is Hydrolysis of proteins to small peptides in the presence of ATP and magnesium. alpha-casein is the usual test substrate. In the absence of ATP, only oligopeptides shorter than five residues are hydrolyzed (such as succinyl-Leu-Tyr-|-NHMec, and Leu-Tyr-Leu-|-Tyr-Trp, in which cleavage of the -Tyr-|-Leu- and -Tyr-|-Trp bonds also occurs).. Functionally, cleaves peptides in various proteins in a process that requires ATP hydrolysis. Has a chymotrypsin-like activity. Plays a major role in the degradation of misfolded proteins. The protein is ATP-dependent Clp protease proteolytic subunit of Paracidovorax citrulli (strain AAC00-1) (Acidovorax citrulli).